The following is a 403-amino-acid chain: Phosphomevalonate dehydratase large subunit (403 aa).

5 residues coordinate (R)-5-phosphomevalonate: Gly48, Val49, Ser50, Asn79, and Pro80. Cys119 lines the [4Fe-4S] cluster pocket. Residues Glu138 and Ser139 each coordinate (R)-5-phosphomevalonate. The [4Fe-4S] cluster site is built by Cys301 and Cys358. (R)-5-phosphomevalonate is bound at residue Lys378.

This sequence belongs to the AcnX type II large subunit family. Heterodimer composed of a large subunit (PMDh-L) and a small subunit (PMDh-S). Requires [4Fe-4S] cluster as cofactor.

It carries out the reaction (R)-5-phosphomevalonate = (2E)-3-methyl-5-phosphooxypent-2-enoate + H2O. The protein operates within isoprenoid biosynthesis; isopentenyl diphosphate biosynthesis via mevalonate pathway. Functionally, component of a hydro-lyase that catalyzes the dehydration of mevalonate 5-phosphate (MVA5P) to form trans-anhydromevalonate 5-phosphate (tAHMP). Involved in the archaeal mevalonate (MVA) pathway, which provides fundamental precursors for isoprenoid biosynthesis, such as isopentenyl diphosphate (IPP) and dimethylallyl diphosphate (DMAPP). This chain is Phosphomevalonate dehydratase large subunit, found in Methanocaldococcus jannaschii (strain ATCC 43067 / DSM 2661 / JAL-1 / JCM 10045 / NBRC 100440) (Methanococcus jannaschii).